A 201-amino-acid polypeptide reads, in one-letter code: Small ribosomal subunit protein uS4 (201 aa).

An S4 RNA-binding domain is found at 93–153; the sequence is QRLDNIVYRL…EKSKNLVIIK (61 aa).

The protein belongs to the universal ribosomal protein uS4 family. As to quaternary structure, part of the 30S ribosomal subunit. Contacts protein S5. The interaction surface between S4 and S5 is involved in control of translational fidelity.

Functionally, one of the primary rRNA binding proteins, it binds directly to 16S rRNA where it nucleates assembly of the body of the 30S subunit. In terms of biological role, with S5 and S12 plays an important role in translational accuracy. The chain is Small ribosomal subunit protein uS4 from Latilactobacillus sakei subsp. sakei (strain 23K) (Lactobacillus sakei subsp. sakei).